Here is a 600-residue protein sequence, read N- to C-terminus: Aspartate--tRNA(Asp/Asn) ligase (600 aa).

Residue E174 participates in L-aspartate binding. Positions 198-201 are aspartate; it reads QLFK. An L-aspartate-binding site is contributed by R220. Residues 220–222 and Q229 contribute to the ATP site; that span reads RDE. Position 457 (H457) interacts with L-aspartate. ATP is bound at residue E491. Residue R498 participates in L-aspartate binding. 543 to 546 serves as a coordination point for ATP; sequence GLDR.

The protein belongs to the class-II aminoacyl-tRNA synthetase family. Type 1 subfamily. As to quaternary structure, homodimer.

It localises to the cytoplasm. It carries out the reaction tRNA(Asx) + L-aspartate + ATP = L-aspartyl-tRNA(Asx) + AMP + diphosphate. In terms of biological role, aspartyl-tRNA synthetase with relaxed tRNA specificity since it is able to aspartylate not only its cognate tRNA(Asp) but also tRNA(Asn). Reaction proceeds in two steps: L-aspartate is first activated by ATP to form Asp-AMP and then transferred to the acceptor end of tRNA(Asp/Asn). The protein is Aspartate--tRNA(Asp/Asn) ligase of Burkholderia orbicola (strain AU 1054).